The primary structure comprises 385 residues: Homoserine O-succinyltransferase (385 aa).

An AB hydrolase-1 domain is found at 45 to 355 (NAVLVCHALN…PHGHDAFLLD (311 aa)). Serine 151 serves as the catalytic Nucleophile. Arginine 221 is a substrate binding site. Residues aspartate 316 and histidine 349 contribute to the active site. Aspartate 350 serves as a coordination point for substrate.

Belongs to the AB hydrolase superfamily. MetX family. As to quaternary structure, homodimer.

The protein resides in the cytoplasm. It carries out the reaction L-homoserine + succinyl-CoA = O-succinyl-L-homoserine + CoA. The protein operates within amino-acid biosynthesis; L-methionine biosynthesis via de novo pathway; O-succinyl-L-homoserine from L-homoserine: step 1/1. Transfers a succinyl group from succinyl-CoA to L-homoserine, forming succinyl-L-homoserine. The polypeptide is Homoserine O-succinyltransferase (Janthinobacterium sp. (strain Marseille) (Minibacterium massiliensis)).